The chain runs to 209 residues: Transmembrane protein 52 (209 aa).

The signal sequence occupies residues 1 to 32 (MARGPLAARGLRLLLPLLPLLPLLPLPQVALG). The helical transmembrane segment at 56-76 (VGLILLAVLLLLLCGVTAGCV) threads the bilayer. The segment at 145-209 (AYSLYTPEPP…QLPPCSPGAP (65 aa)) is disordered. The span at 159-170 (EAVKMAKPREEG) shows a compositional bias: basic and acidic residues. Residues 186–202 (LETTPVPQESGPNTQLP) are compositionally biased toward polar residues.

The protein resides in the membrane. The protein is Transmembrane protein 52 (TMEM52) of Homo sapiens (Human).